The chain runs to 376 residues: Probable ribonucleoside-diphosphate reductase small subunit 048L (376 aa).

D110, E140, and H143 together coordinate Fe cation. The active site involves Y147. Fe cation-binding residues include E217, E251, and H254.

The protein belongs to the ribonucleoside diphosphate reductase small chain family. Heterotetramer composed of a homodimer of the large subunit (R1) and a homodimer of the small subunit (R2). Larger multisubunit protein complex are also active, composed of (R1)n(R2)n. The cofactor is Fe cation.

It catalyses the reaction a 2'-deoxyribonucleoside 5'-diphosphate + [thioredoxin]-disulfide + H2O = a ribonucleoside 5'-diphosphate + [thioredoxin]-dithiol. In terms of biological role, ribonucleoside-diphosphate reductase holoenzyme provides the precursors necessary for viral DNA synthesis. Allows virus growth in non-dividing cells. Catalyzes the biosynthesis of deoxyribonucleotides from the corresponding ribonucleotides. The chain is Probable ribonucleoside-diphosphate reductase small subunit 048L from Invertebrate iridescent virus 3 (IIV-3).